Consider the following 286-residue polypeptide: MAENTMWHETLHDQFGQYFAVDNVLYHEKTDHQDLIIFENAAFGRVMALDGVVQTTERDEFIYHEMMTHVPLLAHGHAKHVLIIGGGDGAMLREVTRHKNVETITMVEIDAGVVSFCRQYLPNHNAGSYDDPRFTLVIDDGVNFVNQTHQTFDVIISDCTDPIGPGESLFTSAFYEGCKRCLNPGGIFVAQNGVCFLQQDEALDSHRKLSHYFSDVSFYQAAIPTYYGGIMTFAWATDNDAIRHLSSETIQARFHAAGLKCRYYNPAIHAAAFALPQYLHDALSAQ.

The PABS domain occupies 5 to 238; that stretch reads TMWHETLHDQ…GIMTFAWATD (234 aa). Gln33 contacts S-methyl-5'-thioadenosine. Spermidine-binding residues include His64 and Asp88. Residues Glu108 and 140–141 each bind S-methyl-5'-thioadenosine; that span reads DG. The active-site Proton acceptor is the Asp158. Spermidine is bound at residue 158-161; it reads DCTD. Residue Pro165 participates in S-methyl-5'-thioadenosine binding.

Belongs to the spermidine/spermine synthase family. Homodimer or homotetramer.

The protein resides in the cytoplasm. The catalysed reaction is S-adenosyl 3-(methylsulfanyl)propylamine + putrescine = S-methyl-5'-thioadenosine + spermidine + H(+). The protein operates within amine and polyamine biosynthesis; spermidine biosynthesis; spermidine from putrescine: step 1/1. Catalyzes the irreversible transfer of a propylamine group from the amino donor S-adenosylmethioninamine (decarboxy-AdoMet) to putrescine (1,4-diaminobutane) to yield spermidine. The sequence is that of Polyamine aminopropyltransferase from Salmonella arizonae (strain ATCC BAA-731 / CDC346-86 / RSK2980).